The sequence spans 382 residues: uncharacterized protein (382 aa).

The 92-residue stretch at 1–92 (MQFLSVIPEQ…GATAYRNTEF (92 aa)) folds into the PE domain. Transmembrane regions (helical) follow at residues 23 to 43 (SALSASYAAAAGPTTAVVSAA), 155 to 175 (AAVAPLPSAGAGLAQVVNGVV), 203 to 223 (FIVAGQSALTGVALLQPAVVG), 230 to 250 (TFLTAGTSAATGLGLLTLAGV), 261 to 281 (LASGTAATGLGLLGSAGVQLF), 284 to 304 (AFLLAVPTALGGVGSLAIAVV), 315 to 335 (LVVPNVVAGIAALQTAGAQFA), and 347 to 367 (LGAPGIAVLQTAGGHFAQGIG).

The protein belongs to the mycobacterial PE family.

It localises to the cell membrane. This is an uncharacterized protein from Mycobacterium bovis (strain ATCC BAA-935 / AF2122/97).